We begin with the raw amino-acid sequence, 126 residues long: Fluoride-specific ion channel FluC (126 aa).

Helical transmembrane passes span Ser4–Leu24, Gly36–Ala56, Leu68–Val88, and Ala99–Ala119. Na(+)-binding residues include Gly75 and Thr78.

It belongs to the fluoride channel Fluc/FEX (TC 1.A.43) family.

The protein localises to the cell inner membrane. It catalyses the reaction fluoride(in) = fluoride(out). Its activity is regulated as follows. Na(+) is not transported, but it plays an essential structural role and its presence is essential for fluoride channel function. Its function is as follows. Fluoride-specific ion channel. Important for reducing fluoride concentration in the cell, thus reducing its toxicity. The chain is Fluoride-specific ion channel FluC from Chromobacterium violaceum (strain ATCC 12472 / DSM 30191 / JCM 1249 / CCUG 213 / NBRC 12614 / NCIMB 9131 / NCTC 9757 / MK).